A 617-amino-acid chain; its full sequence is uncharacterized protein (617 aa).

Residues 10-30 form a helical membrane-spanning segment; it reads AFFFFFVSLILLFLSPSYSDV. The disordered stretch occupies residues 34 to 58; the sequence is ESDPIPYENSDASPGVVTSSESDRQ. The span at 43–53 shows a compositional bias: polar residues; the sequence is SDASPGVVTSS. A coiled-coil region spans residues 60–86; sequence VSLHRLEELVRNLTELVARLDAKLSET. Residues 473–493 traverse the membrane as a helical segment; sequence MLWSSPVFFFILFLFGAWHFF. Over residues 511 to 529 the composition is skewed to low complexity; it reads STTMSSSSTTTAQNSSAFS. Residues 511 to 617 are disordered; that stretch reads STTMSSSSTT…GNNKALDDES (107 aa). The segment covering 531-543 has biased composition (basic and acidic residues); it reads STRRNDDHMDLRR. Residues 563–584 show a composition bias toward polar residues; the sequence is VGSNDPSSRAPVETTNYRTTAQ. Over residues 590-599 the composition is skewed to gly residues; the sequence is GGSGLDSGGF.

The protein localises to the membrane. This is an uncharacterized protein from Arabidopsis thaliana (Mouse-ear cress).